Reading from the N-terminus, the 284-residue chain is Diaminopimelate epimerase (284 aa).

Substrate contacts are provided by N14 and N67. C76 functions as the Proton donor in the catalytic mechanism. Substrate contacts are provided by residues G77 to N78, N166, N199, and E217 to R218. The active-site Proton acceptor is C226. Residue G227 to T228 participates in substrate binding.

This sequence belongs to the diaminopimelate epimerase family. Homodimer.

The protein localises to the cytoplasm. The enzyme catalyses (2S,6S)-2,6-diaminopimelate = meso-2,6-diaminopimelate. Its pathway is amino-acid biosynthesis; L-lysine biosynthesis via DAP pathway; DL-2,6-diaminopimelate from LL-2,6-diaminopimelate: step 1/1. In terms of biological role, catalyzes the stereoinversion of LL-2,6-diaminopimelate (L,L-DAP) to meso-diaminopimelate (meso-DAP), a precursor of L-lysine and an essential component of the bacterial peptidoglycan. This is Diaminopimelate epimerase from Bacillus velezensis (strain DSM 23117 / BGSC 10A6 / LMG 26770 / FZB42) (Bacillus amyloliquefaciens subsp. plantarum).